The chain runs to 244 residues: NAD-dependent protein deacetylase (244 aa).

Positions 1 to 244 (MTGEQLAHWI…LSAVQRAVMP (244 aa)) constitute a Deacetylase sirtuin-type domain. Residues A22, T26, F33, R34, Q103, I105, D106, and H121 each contribute to the NAD(+) site. A nicotinamide-binding site is contributed by F33. The nicotinamide site is built by I105 and D106. H121 acts as the Proton acceptor in catalysis. Positions 129, 132, 150, and 152 each coordinate Zn(2+). The NAD(+) site is built by T190, S191, N213, and L231.

The protein belongs to the sirtuin family. Class U subfamily. Requires Zn(2+) as cofactor.

It is found in the cytoplasm. The catalysed reaction is N(6)-acetyl-L-lysyl-[protein] + NAD(+) + H2O = 2''-O-acetyl-ADP-D-ribose + nicotinamide + L-lysyl-[protein]. NAD-dependent protein deacetylase which modulates the activities of several enzymes which are inactive in their acetylated form. The sequence is that of NAD-dependent protein deacetylase from Cutibacterium acnes (strain DSM 16379 / KPA171202) (Propionibacterium acnes).